We begin with the raw amino-acid sequence, 694 residues long: Elongation factor G (694 aa).

The region spanning 9–288 is the tr-type G domain; sequence DAIRNIGIMA…VIVKWLPSPL (280 aa). GTP contacts are provided by residues 18-25, 82-86, and 136-139; these read AHIDAGKT, DTPGH, and NKMD.

Belongs to the TRAFAC class translation factor GTPase superfamily. Classic translation factor GTPase family. EF-G/EF-2 subfamily.

It localises to the cytoplasm. Functionally, catalyzes the GTP-dependent ribosomal translocation step during translation elongation. During this step, the ribosome changes from the pre-translocational (PRE) to the post-translocational (POST) state as the newly formed A-site-bound peptidyl-tRNA and P-site-bound deacylated tRNA move to the P and E sites, respectively. Catalyzes the coordinated movement of the two tRNA molecules, the mRNA and conformational changes in the ribosome. This chain is Elongation factor G, found in Chlamydia trachomatis serovar A (strain ATCC VR-571B / DSM 19440 / HAR-13).